We begin with the raw amino-acid sequence, 322 residues long: Basic 30 kDa endochitinase (322 aa).

The first 22 residues, 1–22, serve as a signal peptide directing secretion; it reads MRLSEFTTLFLLFSVLLLSASA. Residues 23 to 64 enclose the Chitin-binding type-1 domain; it reads EQCGSQAGGALCASGLCCSKFGWCGNTNEYCGPGNCQSQCPG. 4 disulfide bridges follow: C25-C40, C34-C46, C39-C53, and C58-C62. 2 positions are modified to 4-hydroxyproline: P66 and P68. Intrachain disulfides connect C93-C156, C168-C176, and C275-C307. Residue E138 is the Proton donor of the active site. Residues 316-322 constitute a propeptide, removed in mature form; that stretch reads GLLVDIM.

This sequence belongs to the glycosyl hydrolase 19 family. Chitinase class I subfamily. In terms of processing, the 4-hydroxyproline residues are not glycosylated in this plant vacuolar protein.

Its subcellular location is the vacuole. The protein localises to the secreted. It localises to the cell wall. It catalyses the reaction Random endo-hydrolysis of N-acetyl-beta-D-glucosaminide (1-&gt;4)-beta-linkages in chitin and chitodextrins.. In terms of biological role, defense against chitin-containing fungal pathogens. This Solanum lycopersicum (Tomato) protein is Basic 30 kDa endochitinase (CHI9).